Consider the following 951-residue polypeptide: Leucine-rich repeat-containing G-protein coupled receptor 4 (951 aa).

The signal sequence occupies residues 1-19 (MPGPLGLLCFLALGLRGSA). The Extracellular segment spans residues 20–544 (EPSGAAPPLC…LLGSWMIRLT (525 aa)). Residues 25–57 (APPLCAAPCSCDGDRRVDCSGKGLTAVPEGLSA) form the LRRNT domain. 2 cysteine pairs are disulfide-bonded: Cys29–Cys35 and Cys33–Cys43. LRR repeat units lie at residues 35–58 (CDGDRRVDCSGKGLTAVPEGLSAF), 59–79 (TQLLDISMNNITQLPEDAFKN), 81–103 (PFLEELRLAGNDLSFIHPKALSG), 104–127 (LKELKVLTLQNNQLKTVPSEAIRG), 128–151 (LSSLQSLRLDANHITSVPEDSFEG), 153–175 (TQLRHLWLDDNSLTEVPVHPLSN), 176–199 (LPTLQALTLALNKISSIPDFAFTN), 201–223 (SSLVVLHLHNNKIKSLGQHCFDG), 224–247 (LDNLETLDLNYNNLGEFPQAIKAL), 248–270 (PSLKELLFHSNSISVIPDGAFDG), and 272–294 (PLLKTIHLYDNPLSFVGNSAFHN). Asn68 is a glycosylation site (N-linked (GlcNAc...) asparagine). N-linked (GlcNAc...) asparagine glycosylation occurs at Asn199. 2 N-linked (GlcNAc...) asparagine glycosylation sites follow: Asn294 and Asn314. LRR repeat units lie at residues 318 to 341 (TVRLESLTLTGTKISSISNNLCQE), 342 to 363 (QKRLRTLDLSYNSIKDLPSFNG), 364 to 387 (CHALEEISLQRNQIHQIKEDTFQG), 388 to 411 (LTSLKILDLSRNLIHEIDDRAFAK), and 413 to 435 (GSITNLDVSFNELTSFPTEGLNG). The cysteines at positions 339 and 364 are disulfide-linked. 2 disulfides stabilise this stretch: Cys470-Cys522 and Cys471-Cys476. Residues 545 to 565 (VWFIFLVALFFNLLVILTTFA) form a helical membrane-spanning segment. The Cytoplasmic portion of the chain corresponds to 566–575 (SCTSVPSSKL). A helical membrane pass occupies residues 576-596 (FIGLISVSNLFMGAYTGILTF). The Extracellular segment spans residues 597–619 (LDAVSWGRFAEFGIWWEIGSGCK). Cys618 and Cys693 are oxidised to a cystine. The helical transmembrane segment at 620-640 (IAGFLAVFSSESAIFLLMLAA) threads the bilayer. The Cytoplasmic segment spans residues 641 to 661 (VERSLSAKDMMKNGKSNHLRQ). A helical membrane pass occupies residues 662 to 682 (FRIAALLAFLGAAVAGSFPLF). The Extracellular portion of the chain corresponds to 683–703 (HRGEYSASPLCLPFPTGETPS). The chain crosses the membrane as a helical span at residues 704 to 724 (LGFTVTLVLLNSLAFLLMAII). Residues 725 to 756 (YTKLYCNLEKEDLSESSQSSMIKHVAWLIFTN) are Cytoplasmic-facing. Residues 757 to 777 (CIFFCPVAFFSFAPLITAVSI) form a helical membrane-spanning segment. The Extracellular segment spans residues 778–783 (SPEIMK). The helical transmembrane segment at 784-804 (SVTLIFFPLPACLNPVLYVFF) threads the bilayer. Residues 805 to 951 (NPKFKEDWKL…YAYNLPRVKD (147 aa)) are Cytoplasmic-facing. Residue Ser920 is modified to Phosphoserine.

The protein belongs to the G-protein coupled receptor 1 family.

It is found in the cell membrane. Functionally, receptor for R-spondins that potentiates the canonical Wnt signaling pathway and is involved in the formation of various organs. Upon binding to R-spondins (RSPO1, RSPO2, RSPO3 or RSPO4), associates with phosphorylated LRP6 and frizzled receptors that are activated by extracellular Wnt receptors, triggering the canonical Wnt signaling pathway to increase expression of target genes. In contrast to classical G-protein coupled receptors, does not activate heterotrimeric G-proteins to transduce the signal. Its function as activator of the Wnt signaling pathway is required for the development of various organs, including liver, kidney, intestine, bone, reproductive tract and eye. May also act as a receptor for norrin (NDP), such results however required additional confirmation in vivo. Required during spermatogenesis to activate the Wnt signaling pathway in peritubular myoid cells. Required for the maintenance of intestinal stem cells and Paneth cell differentiation in postnatal intestinal crypts. Acts as a regulator of bone formation and remodeling. Involved in kidney development; required for maintaining the ureteric bud in an undifferentiated state. Involved in the development of the anterior segment of the eye. Required during erythropoiesis. Also acts as a negative regulator of innate immunity by inhibiting TLR2/TLR4 associated pattern-recognition and pro-inflammatory cytokine production. Plays an important role in regulating the circadian rhythms of plasma lipids, partially through regulating the rhythmic expression of MTTP. Required for proper development of GnRH neurons (gonadotropin-releasing hormone expressing neurons) that control the release of reproductive hormones from the pituitary gland. This chain is Leucine-rich repeat-containing G-protein coupled receptor 4 (LGR4), found in Bos taurus (Bovine).